A 492-amino-acid polypeptide reads, in one-letter code: UDP-glucosyl transferase 73DL1 (492 aa).

H27 functions as the Proton acceptor in the catalytic mechanism. D131 acts as the Charge relay in catalysis. The UDP site is built by W352, V353, H370, T375, E378, and Y392.

This sequence belongs to the UDP-glycosyltransferase family. As to expression, mainly expressed in flowers, flower buds and young leaves, and, to a lesser extent, in old leaves, stems and roots.

The protein operates within secondary metabolite biosynthesis; terpenoid biosynthesis. Its function is as follows. Component of the oleanane-type triterpene saponins (e.g. saponarioside A and saponarioside B) biosynthetic pathway, leading to the production of natural products with detergent properties used as traditional sources of soap. A glycosyltransferase that mediates the conversion of QA-mono to QA-di via the elongation of the C-3 sugar chain with a D-galactose. The protein is UDP-glucosyl transferase 73DL1 of Saponaria officinalis (Common soapwort).